The sequence spans 556 residues: Jerky protein homolog (556 aa).

The 52-residue stretch at 11–62 (RGEKRKRVVLTLKEKIDICTRLEKGESRKALMQEYNVGMSTLYDIRAHKAQL) folds into the HTH psq-type domain. 2 DNA-binding regions (H-T-H motif) span residues 38–58 (RKAL…IRAH) and 110–142 (PMLI…FKAR). In terms of domain architecture, HTH CENPB-type spans 77-149 (QRRTLHTPKL…KARHGIKKLD (73 aa)). Residues 213–382 (KDRLTVLMCA…VPSHVFRRAW (170 aa)) form the DDE-1 domain. A Phosphoserine modification is found at Ser414. The tract at residues 439–482 (SWGVAGREAEGGRPPAATSPAEVVWSSEKTPKADQDGRGDPGEG) is disordered. Basic and acidic residues predominate over residues 467–479 (KTPKADQDGRGDP).

The protein belongs to the tigger transposable element derived protein family. As to expression, expressed ubiquitously.

Its subcellular location is the nucleus. May bind DNA. The polypeptide is Jerky protein homolog (Homo sapiens (Human)).